Here is a 194-residue protein sequence, read N- to C-terminus: Peptidyl-tRNA hydrolase (194 aa).

Position 16 (Y16) interacts with tRNA. The Proton acceptor role is filled by H21. Residues F67, N69, and N115 each coordinate tRNA.

The protein belongs to the PTH family. As to quaternary structure, monomer.

It is found in the cytoplasm. It carries out the reaction an N-acyl-L-alpha-aminoacyl-tRNA + H2O = an N-acyl-L-amino acid + a tRNA + H(+). Hydrolyzes ribosome-free peptidyl-tRNAs (with 1 or more amino acids incorporated), which drop off the ribosome during protein synthesis, or as a result of ribosome stalling. Its function is as follows. Catalyzes the release of premature peptidyl moieties from peptidyl-tRNA molecules trapped in stalled 50S ribosomal subunits, and thus maintains levels of free tRNAs and 50S ribosomes. The polypeptide is Peptidyl-tRNA hydrolase (Escherichia fergusonii (strain ATCC 35469 / DSM 13698 / CCUG 18766 / IAM 14443 / JCM 21226 / LMG 7866 / NBRC 102419 / NCTC 12128 / CDC 0568-73)).